Consider the following 175-residue polypeptide: Ribosome maturation factor RimM (175 aa).

The 75-residue stretch at 93-167 (DDEFYYSDLI…YIIITLPEVI (75 aa)) folds into the PRC barrel domain.

Belongs to the RimM family. Binds ribosomal protein uS19.

The protein resides in the cytoplasm. Its function is as follows. An accessory protein needed during the final step in the assembly of 30S ribosomal subunit, possibly for assembly of the head region. Essential for efficient processing of 16S rRNA. May be needed both before and after RbfA during the maturation of 16S rRNA. It has affinity for free ribosomal 30S subunits but not for 70S ribosomes. This Ehrlichia chaffeensis (strain ATCC CRL-10679 / Arkansas) protein is Ribosome maturation factor RimM.